The following is an 81-amino-acid chain: ATP synthase subunit C, plastid (81 aa).

The next 2 membrane-spanning stretches (helical) occupy residues 3 to 23 and 61 to 81; these read PLIP…ASIG and EALT…NPFI.

It belongs to the ATPase C chain family. F-type ATPases have 2 components, F(1) - the catalytic core - and F(0) - the membrane proton channel. F(1) has five subunits: alpha(3), beta(3), gamma(1), delta(1), epsilon(1). F(0) has four main subunits: a(1), b(1), b'(1) and c(10-14). The alpha and beta chains form an alternating ring which encloses part of the gamma chain. F(1) is attached to F(0) by a central stalk formed by the gamma and epsilon chains, while a peripheral stalk is formed by the delta, b and b' chains.

It localises to the plastid membrane. Its function is as follows. F(1)F(0) ATP synthase produces ATP from ADP in the presence of a proton or sodium gradient. F-type ATPases consist of two structural domains, F(1) containing the extramembraneous catalytic core and F(0) containing the membrane proton channel, linked together by a central stalk and a peripheral stalk. During catalysis, ATP synthesis in the catalytic domain of F(1) is coupled via a rotary mechanism of the central stalk subunits to proton translocation. Key component of the F(0) channel; it plays a direct role in translocation across the membrane. A homomeric c-ring of between 10-14 subunits forms the central stalk rotor element with the F(1) delta and epsilon subunits. This chain is ATP synthase subunit C, plastid, found in Aneura mirabilis (Parasitic liverwort).